The chain runs to 384 residues: GTPase Obg (384 aa).

An Obg domain is found at M1–L159. Disordered regions lie at residues A20–W46 and H129–T149. A compositionally biased stretch (gly residues) spans G33–G43. Residues F130 to P143 are compositionally biased toward polar residues. One can recognise an OBG-type G domain in the interval A160–A348. GTP contacts are provided by residues G166–S173, F191–H195, D213–G216, N284–D287, and S329–L331. S173 and T193 together coordinate Mg(2+).

It belongs to the TRAFAC class OBG-HflX-like GTPase superfamily. OBG GTPase family. In terms of assembly, monomer. It depends on Mg(2+) as a cofactor.

It is found in the cytoplasm. Its function is as follows. An essential GTPase which binds GTP, GDP and possibly (p)ppGpp with moderate affinity, with high nucleotide exchange rates and a fairly low GTP hydrolysis rate; the half-life of the GTP-bound state is about 50 minutes. Plays a role in control of the cell cycle, stress response, ribosome biogenesis and in those bacteria that undergo differentiation, in morphogenesis control. The polypeptide is GTPase Obg (Neisseria gonorrhoeae (strain ATCC 700825 / FA 1090)).